We begin with the raw amino-acid sequence, 518 residues long: 2-isopropylmalate synthase (518 aa).

The Pyruvate carboxyltransferase domain occupies 5 to 267; it reads VIIFDTTLRD…STKIKHKEIY (263 aa). Residues D14, H202, H204, and N238 each coordinate Mn(2+). The tract at residues 392-518 is regulatory domain; it reads SLSFFSVQSI…KLKKLKKINN (127 aa).

It belongs to the alpha-IPM synthase/homocitrate synthase family. LeuA type 1 subfamily. As to quaternary structure, homodimer. Mn(2+) serves as cofactor.

It is found in the cytoplasm. The enzyme catalyses 3-methyl-2-oxobutanoate + acetyl-CoA + H2O = (2S)-2-isopropylmalate + CoA + H(+). It participates in amino-acid biosynthesis; L-leucine biosynthesis; L-leucine from 3-methyl-2-oxobutanoate: step 1/4. In terms of biological role, catalyzes the condensation of the acetyl group of acetyl-CoA with 3-methyl-2-oxobutanoate (2-ketoisovalerate) to form 3-carboxy-3-hydroxy-4-methylpentanoate (2-isopropylmalate). The chain is 2-isopropylmalate synthase from Buchnera aphidicola subsp. Rhopalosiphum padi.